The primary structure comprises 526 residues: Acetyl-CoA hydrolase (526 aa).

An N-acetylthreonine modification is found at T2. Residue 277-281 (GIGNI) participates in CoA binding. E302 serves as the catalytic 5-glutamyl coenzyme A thioester intermediate. Position 350 is a phosphoserine (S350). Residues N392 and G396 each coordinate CoA.

This sequence belongs to the acetyl-CoA hydrolase/transferase family. In terms of assembly, monomer. Post-translationally, glycosylated; contains mannose.

Its subcellular location is the cytoplasm. The enzyme catalyses acetyl-CoA + H2O = acetate + CoA + H(+). Functionally, presumably involved in regulating the intracellular acetyl-CoA pool for fatty acid and cholesterol synthesis and fatty acid oxidation. It may be involved in overall regulation of acetylation during melatonin synthesis. The chain is Acetyl-CoA hydrolase (ACH1) from Saccharomyces cerevisiae (strain ATCC 204508 / S288c) (Baker's yeast).